The sequence spans 361 residues: Protein RecA (361 aa).

Residue 77-84 participates in ATP binding; it reads GPESSGKT.

It belongs to the RecA family.

The protein resides in the cytoplasm. In terms of biological role, can catalyze the hydrolysis of ATP in the presence of single-stranded DNA, the ATP-dependent uptake of single-stranded DNA by duplex DNA, and the ATP-dependent hybridization of homologous single-stranded DNAs. It interacts with LexA causing its activation and leading to its autocatalytic cleavage. This Brucella abortus (strain S19) protein is Protein RecA.